An 80-amino-acid chain; its full sequence is uncharacterized protein (80 aa).

Residues 57–80 (GNIDSDVSDQDQIGNPSAPISNQI) form a disordered region.

This is an uncharacterized protein from Bacillus subtilis (strain 168).